A 158-amino-acid chain; its full sequence is Transcriptional repressor NrdR (158 aa).

A zinc finger lies at 3-34; that stretch reads CPSCQNTDSRVLESRAAEGGRSVRRRRECLNC. The ATP-cone domain maps to 49-139; the sequence is ITVIKRNGHR…VYRHFRSVSD (91 aa).

Belongs to the NrdR family. The cofactor is Zn(2+).

Its function is as follows. Negatively regulates transcription of bacterial ribonucleotide reductase nrd genes and operons by binding to NrdR-boxes. In Synechococcus sp. (strain CC9311), this protein is Transcriptional repressor NrdR.